A 274-amino-acid chain; its full sequence is NH(3)-dependent NAD(+) synthetase (274 aa).

Residue 46 to 53 coordinates ATP; sequence GISGGQDS. Residue Asp-52 coordinates Mg(2+). Arg-140 contacts deamido-NAD(+). Residue Thr-160 coordinates ATP. Glu-165 serves as a coordination point for Mg(2+). Deamido-NAD(+) is bound by residues Lys-173 and Asp-180. ATP is bound by residues Lys-189 and Thr-211. 260–261 contributes to the deamido-NAD(+) binding site; the sequence is HK.

This sequence belongs to the NAD synthetase family. Homodimer.

The catalysed reaction is deamido-NAD(+) + NH4(+) + ATP = AMP + diphosphate + NAD(+) + H(+). It functions in the pathway cofactor biosynthesis; NAD(+) biosynthesis; NAD(+) from deamido-NAD(+) (ammonia route): step 1/1. In terms of biological role, catalyzes the ATP-dependent amidation of deamido-NAD to form NAD. Uses ammonia as a nitrogen source. In Listeria innocua serovar 6a (strain ATCC BAA-680 / CLIP 11262), this protein is NH(3)-dependent NAD(+) synthetase.